The primary structure comprises 179 residues: Large ribosomal subunit protein uL5 (179 aa).

This sequence belongs to the universal ribosomal protein uL5 family. In terms of assembly, part of the 50S ribosomal subunit; part of the 5S rRNA/L5/L18/L25 subcomplex. Contacts the 5S rRNA and the P site tRNA. Forms a bridge to the 30S subunit in the 70S ribosome.

Its function is as follows. This is one of the proteins that bind and probably mediate the attachment of the 5S RNA into the large ribosomal subunit, where it forms part of the central protuberance. In the 70S ribosome it contacts protein S13 of the 30S subunit (bridge B1b), connecting the 2 subunits; this bridge is implicated in subunit movement. Contacts the P site tRNA; the 5S rRNA and some of its associated proteins might help stabilize positioning of ribosome-bound tRNAs. This chain is Large ribosomal subunit protein uL5, found in Listeria innocua serovar 6a (strain ATCC BAA-680 / CLIP 11262).